The sequence spans 307 residues: Mitochondrial glycine transporter (307 aa).

Solcar repeat units lie at residues 8 to 87 (PRNS…MRSS), 115 to 199 (LTMY…SKQL), and 221 to 305 (TSTT…LVKR). 6 helical membrane-spanning segments follow: residues 14-39 (LIGG…TRIQ), 62-88 (GTLP…RSSL), 121-146 (LLTG…VRYE), 174-197 (GFGA…EKSK), 225-251 (VNTT…KTRM), and 280-298 (GLSM…AWGI).

Belongs to the mitochondrial carrier (TC 2.A.29) family. SLC25A38 subfamily.

The protein localises to the mitochondrion inner membrane. It catalyses the reaction glycine(in) = glycine(out). Functionally, mitochondrial glycine transporter that imports glycine into the mitochondrial matrix. Plays an important role in providing glycine for the first enzymatic step in heme biosynthesis, the condensation of glycine with succinyl-CoA to produce 5-aminolevulinate (ALA) in the mitochondrial matrix. In Saccharomyces cerevisiae (strain RM11-1a) (Baker's yeast), this protein is Mitochondrial glycine transporter.